The chain runs to 1174 residues: Carboxylic acid reductase (1174 aa).

Residues H297, S392, 413 to 414, T418, D491, 503 to 506, K512, and K612 each bind AMP; these read EG and YLDR. The Carrier domain maps to 651 to 726; the sequence is APVLVTVCRA…ALADYVEAAR (76 aa). O-(pantetheine 4'-phosphoryl)serine is present on S685. NADP(+) contacts are provided by residues 787-791, R814, R824, 854-855, 880-882, 919-920, Y956, and K960; these read TGFLG, DK, PAA, and TS.

The protein belongs to the ATP-dependent AMP-binding enzyme family. Carboxylic acid reductase subfamily. The cofactor is pantetheine 4'-phosphate.

It catalyses the reaction a carboxylate + ATP + NADPH + H(+) = an aldehyde + AMP + diphosphate + NADP(+). Catalyzes the ATP- and NADPH-dependent reduction of carboxylic acids to the corresponding aldehydes. Catalyzes the reduction of a wide range of aliphatic fatty acids (C6-C18) into their corresponding aldehydes. Can also reduce benzoate to benzaldehyde. Has a preference for NADPH over NADH as the electron donor. The sequence is that of Carboxylic acid reductase from Mycobacterium marinum (strain ATCC BAA-535 / M).